A 40-amino-acid chain; its full sequence is U12-ctenitoxin-Co1a (40 aa).

4 cysteine pairs are disulfide-bonded: Cys-2-Cys-16, Cys-9-Cys-22, Cys-15-Cys-31, and Cys-24-Cys-29.

As to expression, expressed by the venom gland.

Its subcellular location is the secreted. Functionally, insecticidal neurotoxin that reversibly inhibits the N-methyl-D-aspartate (NMDA)-subtype of ionotropic glutamate receptor (GRIN) and inhibits inactivation of insect sodium channels (Nav). In vivo, is highly toxic to insects. The chain is U12-ctenitoxin-Co1a from Ctenus ornatus (Brazilian spider).